The chain runs to 483 residues: Regulatory protein ViaA (483 aa).

Belongs to the ViaA family. In terms of assembly, homodimer. Interacts with RavA.

The protein localises to the cytoplasm. Its function is as follows. Component of the RavA-ViaA chaperone complex, which may act on the membrane to optimize the function of some of the respiratory chains. ViaA stimulates the ATPase activity of RavA. The polypeptide is Regulatory protein ViaA (Salmonella choleraesuis (strain SC-B67)).